A 432-amino-acid chain; its full sequence is Adenosylhomocysteinase (432 aa).

S2 is subject to N-acetylserine. Substrate is bound by residues T57, D131, and E156. A Phosphoserine modification is found at S183. The tract at residues 183 to 350 (SVTKSKFDNL…EGRLVNLGCA (168 aa)) is NAD binding. Substrate-binding residues include K186 and D190. K186 bears the N6-(2-hydroxyisobutyryl)lysine mark. Y193 is subject to Phosphotyrosine.

It belongs to the adenosylhomocysteinase family. As to quaternary structure, homotetramer. Interaction with AHCYL1. The cofactor is NAD(+).

The protein localises to the cytoplasm. It is found in the melanosome. The protein resides in the nucleus. It localises to the endoplasmic reticulum. The catalysed reaction is S-adenosyl-L-homocysteine + H2O = L-homocysteine + adenosine. The protein operates within amino-acid biosynthesis; L-homocysteine biosynthesis; L-homocysteine from S-adenosyl-L-homocysteine: step 1/1. Functionally, catalyzes the hydrolysis of S-adenosyl-L-homocysteine to form adenosine and homocysteine. Binds copper ions. The polypeptide is Adenosylhomocysteinase (AHCY) (Macaca fascicularis (Crab-eating macaque)).